Consider the following 107-residue polypeptide: U-scoloptoxin(18)-Er1a (107 aa).

A signal peptide spans Met-1 to Ala-21.

This sequence belongs to the scoloptoxin-18 family. Contains 5 disulfide bonds. In terms of tissue distribution, expressed by the venom gland.

It localises to the secreted. In Ethmostigmus rubripes (Giant centipede), this protein is U-scoloptoxin(18)-Er1a.